Consider the following 28-residue polypeptide: leu operon leader peptide (28 aa).

In terms of biological role, involved in control of the biosynthesis of leucine. This chain is leu operon leader peptide (leuL), found in Shigella flexneri.